Reading from the N-terminus, the 364-residue chain is Histidinol-phosphate aminotransferase (364 aa).

Position 224 is an N6-(pyridoxal phosphate)lysine (Lys-224).

It belongs to the class-II pyridoxal-phosphate-dependent aminotransferase family. Histidinol-phosphate aminotransferase subfamily. As to quaternary structure, homodimer. Requires pyridoxal 5'-phosphate as cofactor.

It catalyses the reaction L-histidinol phosphate + 2-oxoglutarate = 3-(imidazol-4-yl)-2-oxopropyl phosphate + L-glutamate. Its pathway is amino-acid biosynthesis; L-histidine biosynthesis; L-histidine from 5-phospho-alpha-D-ribose 1-diphosphate: step 7/9. In Anaeromyxobacter sp. (strain Fw109-5), this protein is Histidinol-phosphate aminotransferase.